Reading from the N-terminus, the 422-residue chain is Blood group Rh(D) polypeptide (422 aa).

A run of 12 helical transmembrane segments spans residues 13–33, 43–63, 76–96, 113–135, 137–159, 170–190, 215–235, 244–266, 272–292, 294–314, 335–355, and 372–392; these read LPLW…FLIG, FMAI…GFGF, VAFS…LDYF, FLSI…AVLG, VNLV…IRVA, IIMM…AWWL, LFAM…NSAL, AVFN…SALS, INMV…GAPS, LISS…ISIW, YTFG…HIIA, and VGAL…TGCL.

This sequence belongs to the ammonium transporter (TC 2.A.49) family. Rh subfamily. Palmitoylated.

It localises to the cell membrane. Its function is as follows. May be part of an oligomeric complex which is likely to have a transport or channel function in the erythrocyte membrane. The polypeptide is Blood group Rh(D) polypeptide (Rhd) (Rattus norvegicus (Rat)).